Reading from the N-terminus, the 124-residue chain is Large ribosomal subunit protein mL51 (124 aa).

Residues 1–31 (MSVFGGLWRSAVNLCQSSRLFSTGSCARIRM) constitute a mitochondrion transit peptide.

The protein belongs to the mitochondrion-specific ribosomal protein mL51 family. In terms of assembly, component of the mitochondrial ribosome large subunit (39S) which comprises a 16S rRNA and about 50 distinct proteins.

Its subcellular location is the mitochondrion. This is Large ribosomal subunit protein mL51 (mrpl51) from Danio rerio (Zebrafish).